The primary structure comprises 240 residues: Ubiquinone biosynthesis O-methyltransferase (240 aa).

The S-adenosyl-L-methionine site is built by Arg44, Gly64, Asp85, and Met129.

The protein belongs to the methyltransferase superfamily. UbiG/COQ3 family.

It catalyses the reaction a 3-demethylubiquinol + S-adenosyl-L-methionine = a ubiquinol + S-adenosyl-L-homocysteine + H(+). The catalysed reaction is a 3-(all-trans-polyprenyl)benzene-1,2-diol + S-adenosyl-L-methionine = a 2-methoxy-6-(all-trans-polyprenyl)phenol + S-adenosyl-L-homocysteine + H(+). The protein operates within cofactor biosynthesis; ubiquinone biosynthesis. O-methyltransferase that catalyzes the 2 O-methylation steps in the ubiquinone biosynthetic pathway. The polypeptide is Ubiquinone biosynthesis O-methyltransferase (Escherichia coli O157:H7).